Here is a 669-residue protein sequence, read N- to C-terminus: Elongation factor G 2 (669 aa).

In terms of domain architecture, tr-type G spans 1–276 (MGIRNIGIMA…SIVDYLPSPF (276 aa)). Residues 10–17 (AHIDAGKT), 74–78 (DTPGH), and 128–131 (NKMD) contribute to the GTP site.

It belongs to the TRAFAC class translation factor GTPase superfamily. Classic translation factor GTPase family. EF-G/EF-2 subfamily.

It is found in the cytoplasm. Its function is as follows. Catalyzes the GTP-dependent ribosomal translocation step during translation elongation. During this step, the ribosome changes from the pre-translocational (PRE) to the post-translocational (POST) state as the newly formed A-site-bound peptidyl-tRNA and P-site-bound deacylated tRNA move to the P and E sites, respectively. Catalyzes the coordinated movement of the two tRNA molecules, the mRNA and conformational changes in the ribosome. In Borreliella afzelii (strain PKo) (Borrelia afzelii), this protein is Elongation factor G 2 (fusA2).